A 302-amino-acid chain; its full sequence is Acetylglutamate kinase (302 aa).

Substrate is bound by residues 55 to 56, arginine 77, and asparagine 176; that span reads GG.

It belongs to the acetylglutamate kinase family. ArgB subfamily.

The protein localises to the cytoplasm. It catalyses the reaction N-acetyl-L-glutamate + ATP = N-acetyl-L-glutamyl 5-phosphate + ADP. Its pathway is amino-acid biosynthesis; L-arginine biosynthesis; N(2)-acetyl-L-ornithine from L-glutamate: step 2/4. Its function is as follows. Catalyzes the ATP-dependent phosphorylation of N-acetyl-L-glutamate. In Corynebacterium efficiens (strain DSM 44549 / YS-314 / AJ 12310 / JCM 11189 / NBRC 100395), this protein is Acetylglutamate kinase.